Here is a 305-residue protein sequence, read N- to C-terminus: tRNA-cytidine(32) 2-sulfurtransferase (305 aa).

The segment at 1 to 20 (MTAVLPLPHPLADPAPRDPR) is disordered. The short motif at 59 to 64 (SGGKDS) is the PP-loop motif element. [4Fe-4S] cluster contacts are provided by cysteine 134, cysteine 137, and cysteine 225. Residues 282–293 (DAPPDLAPDPGA) are compositionally biased toward low complexity. Residues 282–305 (DAPPDLAPDPGAWLTASDATHDSD) form a disordered region.

Belongs to the TtcA family. As to quaternary structure, homodimer. Mg(2+) serves as cofactor. [4Fe-4S] cluster is required as a cofactor.

It localises to the cytoplasm. It carries out the reaction cytidine(32) in tRNA + S-sulfanyl-L-cysteinyl-[cysteine desulfurase] + AH2 + ATP = 2-thiocytidine(32) in tRNA + L-cysteinyl-[cysteine desulfurase] + A + AMP + diphosphate + H(+). The protein operates within tRNA modification. Functionally, catalyzes the ATP-dependent 2-thiolation of cytidine in position 32 of tRNA, to form 2-thiocytidine (s(2)C32). The sulfur atoms are provided by the cysteine/cysteine desulfurase (IscS) system. This Xanthomonas oryzae pv. oryzae (strain PXO99A) protein is tRNA-cytidine(32) 2-sulfurtransferase.